Reading from the N-terminus, the 583-residue chain is Atlastin-2 (583 aa).

The tract at residues 1–44 (MAEGDEAARGQQPHQGLWRRRRTSDPSAAVNHVSSTTSLGENYE) is disordered. Residues 1–60 (MAEGDEAARGQQPHQGLWRRRRTSDPSAAVNHVSSTTSLGENYEDDDLVNSDEVMKKPCP) are N-terminal hypervariable region (HVR). The Cytoplasmic segment spans residues 1-476 (MAEGDEAARG…NIFYAARTPA (476 aa)). At S24 the chain carries Phosphoserine. Residues 91 to 336 (DLNIVVVSVA…LVPLLLAPEN (246 aa)) enclose the GB1/RHD3-type G domain. 9 residues coordinate GDP: R104, K105, G106, K107, S108, F109, Q175, R244, and D245. R104, K105, G106, K107, S108, and F109 together coordinate GTP. S108 provides a ligand contact to Mg(2+). GTP is bound by residues R244 and D245. Positions 256-284 (LEGGKQFLEKRLQVKQNQHEELQNVRKHI) form a coiled coil. An N6-methyllysine modification is found at K270. Positions 303 and 306 each coordinate GDP. A GTP-binding site is contributed by V303. Positions 374-465 (MLQATAEANN…YANFIKHNDG (92 aa)) are 3HB (three-helix bundle) domain. Positions 466-474 (KNIFYAART) are linker. A helical transmembrane segment spans residues 477 to 497 (TLFAVMFAMYIISGLTGFIGL). At 498–499 (NS) the chain is on the lumenal side. Residues 500–520 (IAVLCNLVMGLALIFLCTWAY) form a helical membrane-spanning segment. Topologically, residues 521-583 (VKYSGEFREI…VSHHARLKTD (63 aa)) are cytoplasmic. The tract at residues 547-583 (KPLGDNLMEENIRQSVTNSIKAGLTDQVSHHARLKTD) is autoinhibitory domain.

The protein belongs to the TRAFAC class dynamin-like GTPase superfamily. GB1/RHD3 GTPase family. GB1 subfamily. Monomeric and homodimeric. The homodimer, transiently formed by two molecules on opposing membranes, is the active form mediating ER membrane fusion. Interacts with REEP5 and RTN3; these proteins are involved in endoplasmic reticulum tubular network organization. Interacts with ZFYVE27; both proteins are involved in endoplasmic reticulum tubular network organization. As to expression, expressed in peripheral tissues (at protein level).

The protein localises to the endoplasmic reticulum membrane. It carries out the reaction GTP + H2O = GDP + phosphate + H(+). With respect to regulation, with its alternative C-terminus disrupting the autoinhibitory domain, this brain-specific isoform is probably more active at fusing ER membranes. In terms of biological role, atlastin-2 (ATL2) is a membrane-anchored GTPase that mediates the GTP-dependent fusion of endoplasmic reticulum (ER) membranes, maintaining the continuous ER network. It facilitates the formation of three-way junctions where ER tubules intersect. Two atlastin-2 on neighboring ER tubules bind GTP and form loose homodimers through the GB1/RHD3-type G domains and 3HB regions. Upon GTP hydrolysis, the 3HB regions tighten, pulling the membranes together to drive their fusion. After fusion, the homodimer disassembles upon release of inorganic phosphate (Pi). Subsequently, GDP dissociates, resetting the monomers to a conformation ready for a new fusion cycle. This is Atlastin-2 from Homo sapiens (Human).